A 264-amino-acid chain; its full sequence is 3-methyl-2-oxobutanoate hydroxymethyltransferase (264 aa).

Residues Asp-45 and Asp-84 each coordinate Mg(2+). 3-methyl-2-oxobutanoate-binding positions include 45–46 (DS), Asp-84, and Lys-112. Glu-114 provides a ligand contact to Mg(2+). Glu-181 functions as the Proton acceptor in the catalytic mechanism.

This sequence belongs to the PanB family. In terms of assembly, homodecamer; pentamer of dimers. The cofactor is Mg(2+).

Its subcellular location is the cytoplasm. It carries out the reaction 3-methyl-2-oxobutanoate + (6R)-5,10-methylene-5,6,7,8-tetrahydrofolate + H2O = 2-dehydropantoate + (6S)-5,6,7,8-tetrahydrofolate. It functions in the pathway cofactor biosynthesis; (R)-pantothenate biosynthesis; (R)-pantoate from 3-methyl-2-oxobutanoate: step 1/2. Functionally, catalyzes the reversible reaction in which hydroxymethyl group from 5,10-methylenetetrahydrofolate is transferred onto alpha-ketoisovalerate to form ketopantoate. In Vibrio campbellii (strain ATCC BAA-1116), this protein is 3-methyl-2-oxobutanoate hydroxymethyltransferase.